A 132-amino-acid polypeptide reads, in one-letter code: Small ribosomal subunit protein uS11 (132 aa).

The segment at methionine 1–alanine 24 is disordered. Positions alanine 7–arginine 16 are enriched in basic residues.

This sequence belongs to the universal ribosomal protein uS11 family. In terms of assembly, part of the 30S ribosomal subunit. Interacts with proteins S7 and S18. Binds to IF-3.

Its function is as follows. Located on the platform of the 30S subunit, it bridges several disparate RNA helices of the 16S rRNA. Forms part of the Shine-Dalgarno cleft in the 70S ribosome. The protein is Small ribosomal subunit protein uS11 of Bifidobacterium longum (strain DJO10A).